Consider the following 449-residue polypeptide: Lipase (449 aa).

The first 23 residues, M1–A23, serve as a signal peptide directing secretion. A disordered region spans residues R58–K77. The active-site Charge relay system is the S206. Residues G318, D387, and D396 each contribute to the Ca(2+) site. Hemolysin-type calcium-binding repeat units follow at residues I372–I389 and E390–F407.

It belongs to the AB hydrolase superfamily. Lipase family.

The catalysed reaction is a triacylglycerol + H2O = a diacylglycerol + a fatty acid + H(+). In Pseudomonas fluorescens, this protein is Lipase.